Reading from the N-terminus, the 2575-residue chain is Non-reducing polyketide synthase pks11 (2575 aa).

The region spanning 89–228 (LANIILSPLV…ASKTVSTLQG (140 aa)) is the Starter acyltransferase (SAT) domain. Catalysis depends on Cys129, which acts as the Nucleophile; for transacylase activity. His247 functions as the Proton donor/acceptor; for transacylase activity in the catalytic mechanism. In terms of domain architecture, Ketosynthase family 3 (KS3) spans 373–790 (EDDIAVVGMS…GSNASAVVTE (418 aa)). Active-site for beta-ketoacyl synthase activity residues include Cys538, His673, and His713. The region spanning 901–1192 (FGGQISTYVG…TNMASRALGS (292 aa)) is the Malonyl-CoA:ACP transacylase (MAT) domain. The tract at residues 1276–1409 (PKGLWSFIDY…GQIIFVSTDN (134 aa)) is N-terminal hotdog fold. Residues 1276-1586 (PKGLWSFIDY…YHKVAKATMS (311 aa)) enclose the PKS/mFAS DH domain. The segment at 1307 to 1584 (LVSGHIIAQT…VNYHKVAKAT (278 aa)) is product template (PT) domain. His1311 (proton acceptor; for dehydratase activity) is an active-site residue. The segment at 1437-1586 (ADDIIQGRNI…YHKVAKATMS (150 aa)) is C-terminal hotdog fold. Asp1493 serves as the catalytic Proton donor; for dehydratase activity. The segment covering 1597–1606 (TTSTSTNVKS) has biased composition (polar residues). The tract at residues 1597-1636 (TTSTSTNVKSSPAAAEGSSPVENGASGSGSKAKKTKSGAG) is disordered. Residues 1637 to 1711 (QDVVNKTKGL…GLVQIIKSTL (75 aa)) enclose the Carrier domain. O-(pantetheine 4'-phosphoryl)serine is present on Ser1671. Residues 1713-1762 (VSDDEEGSDQEGSEASSSESSTTFTPSTTATTVSDVEDNGNEKSIGKEKS) form a disordered region. The segment covering 1714-1724 (SDDEEGSDQEG) has biased composition (acidic residues). Over residues 1725–1746 (SEASSSESSTTFTPSTTATTVS) the composition is skewed to low complexity. Positions 1752–1762 (GNEKSIGKEKS) are enriched in basic and acidic residues. The segment at 1835-2130 (LTRIPHDPQH…HIDWTDGNSP (296 aa)) is methyltransferase domain. Residues 2204–2448 (ITGATGSLGS…LCWTPVDDVA (245 aa)) form the Thioester reductase (TE) domain.

The cofactor is pantetheine 4'-phosphate.

Its pathway is secondary metabolite biosynthesis. Functionally, non-reducing polyketide synthase; part of the gene cluster that mediates the biosynthesis of mitorubrinol and mitorubrinic acid, two virulence factors that improve T.marneffei intracellular survival in macrophages. The two polyketide synthases pks12 and pks11 are probably responsible for sequential use in the biosynthesis of mitorubrinol and mitorubrinic acid. The first part of the biosynthesis is probably catalyzed by pks12, which synthesized orsellinic acid. This tetraketide is then used as a starter unit for pks11, which possesses a SAT domain, in the second part of the biosynthesis. Pks11, contains a methyltransferase domain, also served that methylates the products, using a methyl group from S-adenosylmethionine. The protein is Non-reducing polyketide synthase pks11 of Talaromyces marneffei (Penicillium marneffei).